We begin with the raw amino-acid sequence, 728 residues long: Catalase-peroxidase 1 (728 aa).

The N-terminal stretch at 1–22 (MDKTQSSQGKCPVMHGANSAVA) is a signal peptide. The tryptophyl-tyrosyl-methioninium (Trp-Tyr) (with M-251) cross-link spans 97 to 225 (WHSAGTYRVA…LAAVMMGLIY (129 aa)). The active-site Proton acceptor is the histidine 98. A cross-link (tryptophyl-tyrosyl-methioninium (Tyr-Met) (with W-97)) is located at residues 225 to 251 (YVNPEGVDGKPDPLRTAQDVRVTFARM). Residue histidine 266 participates in heme b binding.

This sequence belongs to the peroxidase family. Peroxidase/catalase subfamily. Homodimer or homotetramer. Requires heme b as cofactor. In terms of processing, formation of the three residue Trp-Tyr-Met cross-link is important for the catalase, but not the peroxidase activity of the enzyme.

It carries out the reaction H2O2 + AH2 = A + 2 H2O. The enzyme catalyses 2 H2O2 = O2 + 2 H2O. Its function is as follows. Bifunctional enzyme with both catalase and broad-spectrum peroxidase activity. This is Catalase-peroxidase 1 from Shewanella sp. (strain MR-4).